The following is a 283-amino-acid chain: MEMO1 family protein DKAM_1357 (283 aa).

This sequence belongs to the MEMO1 family.

In Desulfurococcus amylolyticus (strain DSM 18924 / JCM 16383 / VKM B-2413 / 1221n) (Desulfurococcus kamchatkensis), this protein is MEMO1 family protein DKAM_1357.